Reading from the N-terminus, the 301-residue chain is Phosphatidylglycerol--prolipoprotein diacylglyceryl transferase (301 aa).

Transmembrane regions (helical) follow at residues 10–30 (IAFSLGPVKVHWYGLMYLAGF), 57–77 (LLFYAMMGVVLGGRVGYMLFY), 92–112 (VWEGGMSFHGGLIGVLLAVAW), and 119–139 (MHMFDVVDFCAPLVPVGLGFG). A 1,2-diacyl-sn-glycero-3-phospho-(1'-sn-glycerol) is bound at residue Arg-140. 3 helical membrane passes run 202-222 (PSQLYEAFLEGLVMFIVLWLF), 230-250 (YAVSGLFALLYGVFRFLVEFV), and 264-284 (LTRGQILSLPLIVIGLFLFWL).

This sequence belongs to the Lgt family.

It is found in the cell inner membrane. It carries out the reaction L-cysteinyl-[prolipoprotein] + a 1,2-diacyl-sn-glycero-3-phospho-(1'-sn-glycerol) = an S-1,2-diacyl-sn-glyceryl-L-cysteinyl-[prolipoprotein] + sn-glycerol 1-phosphate + H(+). It participates in protein modification; lipoprotein biosynthesis (diacylglyceryl transfer). Catalyzes the transfer of the diacylglyceryl group from phosphatidylglycerol to the sulfhydryl group of the N-terminal cysteine of a prolipoprotein, the first step in the formation of mature lipoproteins. This chain is Phosphatidylglycerol--prolipoprotein diacylglyceryl transferase, found in Xylella fastidiosa (strain M12).